The primary structure comprises 147 residues: Ribonuclease 4 (147 aa).

An N-terminal signal peptide occupies residues 1–28; sequence MALQRTQAFLLLLLLTLLGLGLVQPSYG. The residue at position 29 (Gln29) is a Pyrrolidone carboxylic acid. Residues Arg35, His40, Lys68, Asn71, and Thr72 each coordinate dUMP. The active-site Proton acceptor is the His40. Cystine bridges form between Cys53-Cys109, Cys67-Cys120, Cys85-Cys135, and Cys92-Cys99. Residue His144 is the Proton donor of the active site. Position 145 (Phe145) interacts with dUMP.

This sequence belongs to the pancreatic ribonuclease family.

The protein resides in the secreted. Its function is as follows. Cleaves preferentially after uridine bases. Has antimicrobial activity against uropathogenic E.coli (UPEC). Probably contributes to urinary tract sterility. The chain is Ribonuclease 4 (RNASE4) from Bos taurus (Bovine).